A 453-amino-acid chain; its full sequence is Cholesterol 7-desaturase nvd (453 aa).

Residues 53-73 (IVEYILILTLMFAFSAILYVI) traverse the membrane as a helical segment. Residues 126 to 229 (WFAVAETREL…VVETDGAIWI (104 aa)) enclose the Rieske domain. 4 residues coordinate [2Fe-2S] cluster: Cys167, His169, Cys187, and His190.

The protein belongs to the cholesterol 7-desaturase family. It depends on [2Fe-2S] cluster as a cofactor.

Its subcellular location is the membrane. The enzyme catalyses cholesterol + NADPH + O2 + H(+) = 7-dehydrocholesterol + NADP(+) + 2 H2O. It carries out the reaction cholesterol + NADH + O2 + H(+) = 7-dehydrocholesterol + NAD(+) + 2 H2O. The protein operates within steroid hormone biosynthesis; dafachronic acid biosynthesis. Functionally, catalyzes the production of 7-dehydrocholesterol (7-DHC or cholesta-5,7-dien-3beta-ol) by inserting a double bond (desaturating) at the C7-C8 single bond of cholesterol. Essential regulator of steroid biosynthesis as this reaction is the first step in the synthesis of the steroid hormone Delta(7)-dafachronic acid. In Bombyx mori (Silk moth), this protein is Cholesterol 7-desaturase nvd.